Here is a 287-residue protein sequence, read N- to C-terminus: 4-hydroxybenzoate octaprenyltransferase (287 aa).

The next 6 helical transmembrane spans lie at Trp41–Met61, Trp89–Leu109, Phe133–Phe153, Asp158–Tyr178, Phe202–Ile224, and His266–Gly286.

Belongs to the UbiA prenyltransferase family. The cofactor is Mg(2+).

The protein resides in the cell inner membrane. It carries out the reaction all-trans-octaprenyl diphosphate + 4-hydroxybenzoate = 4-hydroxy-3-(all-trans-octaprenyl)benzoate + diphosphate. The protein operates within cofactor biosynthesis; ubiquinone biosynthesis. In terms of biological role, catalyzes the prenylation of para-hydroxybenzoate (PHB) with an all-trans polyprenyl group. Mediates the second step in the final reaction sequence of ubiquinone-8 (UQ-8) biosynthesis, which is the condensation of the polyisoprenoid side chain with PHB, generating the first membrane-bound Q intermediate 3-octaprenyl-4-hydroxybenzoate. This chain is 4-hydroxybenzoate octaprenyltransferase, found in Burkholderia cenocepacia (strain HI2424).